Consider the following 314-residue polypeptide: D-alanine--D-alanine ligase (314 aa).

The 196-residue stretch at 115-310 folds into the ATP-grasp domain; the sequence is KQVWQSVGLV…FNELVLEILA (196 aa). 141 to 196 contributes to the ATP binding site; that stretch reads LDSLGGQGFVKPAHEGSSIGMSVVSTAQELKAAYEKAAHYDAKVLVERRIVGREFT. Mg(2+)-binding residues include D264, E277, and N279.

The protein belongs to the D-alanine--D-alanine ligase family. It depends on Mg(2+) as a cofactor. The cofactor is Mn(2+).

The protein resides in the cytoplasm. The enzyme catalyses 2 D-alanine + ATP = D-alanyl-D-alanine + ADP + phosphate + H(+). The protein operates within cell wall biogenesis; peptidoglycan biosynthesis. Its function is as follows. Cell wall formation. This is D-alanine--D-alanine ligase from Saccharophagus degradans (strain 2-40 / ATCC 43961 / DSM 17024).